We begin with the raw amino-acid sequence, 249 residues long: Pulmonary surfactant-associated protein A (249 aa).

The signal sequence occupies residues 1 to 20 (MLRWPLALTFLLLAVSGLEC). Positions 28–100 (ASPGIPGTPG…PGERGPPGLP (73 aa)) constitute a Collagen-like domain. The disordered stretch occupies residues 29-102 (SPGIPGTPGS…ERGPPGLPAH (74 aa)). Residues Pro-30, Pro-33, Pro-36, Pro-42, Pro-54, Pro-57, Pro-63, and Pro-70 each carry the 4-hydroxyproline modification. Residues 42-51 (PGRDGRDGIK) show a composition bias toward basic and acidic residues. The span at 84–93 (ERGEKGEPGE) shows a compositional bias: basic and acidic residues. One can recognise a C-type lectin domain in the interval 133–249 (AVGEKVFSTN…QQYRLAICEF (117 aa)). Intrachain disulfides connect Cys-155-Cys-247 and Cys-225-Cys-239. Asn-208 is a glycosylation site (N-linked (GlcNAc...) asparagine). 4 residues coordinate Ca(2+): Glu-216, Arg-218, Asn-235, and Asp-236.

Belongs to the SFTPA family. In terms of assembly, oligomeric complex of 6 set of homotrimers.

It localises to the secreted. The protein localises to the extracellular space. It is found in the extracellular matrix. Its subcellular location is the surface film. Its function is as follows. In presence of calcium ions, it binds to surfactant phospholipids and contributes to lower the surface tension at the air-liquid interface in the alveoli of the mammalian lung and is essential for normal respiration. Enhances the expression of MYO18A/SP-R210 on alveolar macrophages. This chain is Pulmonary surfactant-associated protein A (SFTPA1), found in Sus scrofa (Pig).